A 261-amino-acid chain; its full sequence is Proliferating cell nuclear antigen (261 aa).

N6-acetyllysine is present on residues K14, K77, and K80. The DNA-binding element occupies 61-80 (RCDRNLAMGVNLTSMSKILK). A disulfide bridge links C135 with C162. A Glycyl lysine isopeptide (Lys-Gly) (interchain with G-Cter in SUMO2); alternate cross-link involves residue K164. Residue K164 forms a Glycyl lysine isopeptide (Lys-Gly) (interchain with G-Cter in ubiquitin); alternate linkage. Phosphotyrosine; by EGFR is present on Y211. Residue K248 is modified to N6-acetyllysine. A Glycyl lysine isopeptide (Lys-Gly) (interchain with G-Cter in SUMO2) cross-link involves residue K254.

Belongs to the PCNA family. Homotrimer. Interacts with p300/EP300; the interaction occurs on chromatin in UV-irradiated damaged cells. Interacts with CREBBP (via transactivation domain and C-terminus); the interaction occurs on chromatin in UV-irradiated damaged cells. Directly interacts with POLD1, POLD3 and POLD4 subunits of the DNA polymerase delta complex, POLD3 being the major interacting partner; the interaction with POLD3 is inhibited by CDKN1A/p21(CIP1). Forms a complex with activator 1 heteropentamer in the presence of ATP. Interacts with EXO1, POLH, POLK, DNMT1, ERCC5, FEN1, CDC6 and POLDIP2. Interacts with POLB. Interacts with APEX2; this interaction is triggered by reactive oxygen species and increased by misincorporation of uracil in nuclear DNA. Forms a ternary complex with DNTTIP2 and core histone. Interacts with KCTD10 and PPP1R15A. Interacts with SMARCA5/SNF2H. Interacts with BAZ1B/WSTF; the interaction is direct and is required for BAZ1B/WSTF binding to replication foci during S phase. Interacts with HLTF and SHPRH. Interacts with NUDT15; this interaction is disrupted in response to UV irradiation and acetylation. Interacts with CDKN1A/p21(CIP1) and CDT1; interacts via their PIP-box which also recruits the DCX(DTL) complex. The interaction with CDKN1A inhibits POLD3 binding. Interacts with DDX11. Interacts with EGFR; positively regulates PCNA. Interacts with PARPBP. Interacts (when ubiquitinated) with SPRTN; leading to enhance RAD18-mediated PCNA ubiquitination. Interacts (when polyubiquitinated) with ZRANB3. Interacts with SMARCAD1. Interacts with CDKN1C. Interacts with PCLAF (via PIP-box). Interacts with RTEL1 (via PIP-box); the interaction is direct and essential for the suppression of telomere fragility. Interacts with FAM111A (via PIP-box); the interaction is direct and required for PCNA loading on chromatin binding. Interacts with LIG1. Interacts with SETMAR. Interacts with ANKRD17. Interacts with FBXO18/FBH1 (via PIP-box); the interaction recruits the DCX(DTL) complex and promotes ubiquitination and degradation of FBXO18/FBH1. Interacts with POLN. Interacts with SDE2 (via PIP-box); the interaction is direct and prevents ultraviolet light induced monoubiquitination. Component of the replisome complex composed of at least DONSON, MCM2, MCM7, PCNA and TICRR; interaction at least with PCNA occurs during DNA replication. Interacts with MAPK15; the interaction is chromatin binding dependent and prevents MDM2-mediated PCNA destruction by inhibiting the association of PCNA with MDM2. Interacts with PARP10 (via PIP-box). Interacts with DDI2. Interacts with HMCES (via PIP-box). Interacts with TRAIP (via PIP-box). Interacts with UHRF2. Interacts with ALKBH2; this interaction is enhanced during the S-phase of the cell cycle. Interacts with ATAD5; the interaction promotes USP1-mediated PCNA deubiquitination. Interacts (when phosphorylated) with GRB2. Interacts with nuclear UNG; this interaction mediates UNG recruitment to S-phase replication foci. Interacts with ERCC6L2 (via an atypical PIP-box); this interaction facilitates cenrtomeric localization of ERCC6L2. Post-translationally, phosphorylated. Phosphorylation at Tyr-211 by EGFR stabilizes chromatin-associated PCNA. Acetylated by CREBBP and p300/EP300; preferentially acetylated by CREBBP on Lys-80, Lys-13 and Lys-14 and on Lys-77 by p300/EP300 upon loading on chromatin in response to UV irradiation. Lysine acetylation disrupts association with chromatin, hence promoting PCNA ubiquitination and proteasomal degradation in response to UV damage in a CREBBP- and EP300-dependent manner. Acetylation disrupts interaction with NUDT15 and promotes degradation. In terms of processing, ubiquitinated. Following DNA damage, can be either monoubiquitinated to stimulate direct bypass of DNA lesions by specialized DNA polymerases or polyubiquitinated to promote recombination-dependent DNA synthesis across DNA lesions by template switching mechanisms. Following induction of replication stress, monoubiquitinated by the UBE2B-RAD18 complex on Lys-164, leading to recruit translesion (TLS) polymerases, which are able to synthesize across DNA lesions in a potentially error-prone manner. An error-free pathway also exists and requires non-canonical polyubiquitination on Lys-164 through 'Lys-63' linkage of ubiquitin moieties by the E2 complex UBE2N-UBE2V2 and the E3 ligases, HLTF, RNF8 and SHPRH. This error-free pathway, also known as template switching, employs recombination mechanisms to synthesize across the lesion, using as a template the undamaged, newly synthesized strand of the sister chromatid. Monoubiquitination at Lys-164 also takes place in undamaged proliferating cells, and is mediated by the DCX(DTL) complex, leading to enhance PCNA-dependent translesion DNA synthesis. Sumoylated during S phase. Post-translationally, methylated on glutamate residues by ARMT1.

Its subcellular location is the nucleus. Its function is as follows. Auxiliary protein of DNA polymerase delta and epsilon, is involved in the control of eukaryotic DNA replication by increasing the polymerase's processibility during elongation of the leading strand. Induces a robust stimulatory effect on the 3'-5' exonuclease and 3'-phosphodiesterase, but not apurinic-apyrimidinic (AP) endonuclease, APEX2 activities. Has to be loaded onto DNA in order to be able to stimulate APEX2. Plays a key role in DNA damage response (DDR) by being conveniently positioned at the replication fork to coordinate DNA replication with DNA repair and DNA damage tolerance pathways. Acts as a loading platform to recruit DDR proteins that allow completion of DNA replication after DNA damage and promote postreplication repair: Monoubiquitinated PCNA leads to recruitment of translesion (TLS) polymerases, while 'Lys-63'-linked polyubiquitination of PCNA is involved in error-free pathway and employs recombination mechanisms to synthesize across the lesion. The protein is Proliferating cell nuclear antigen (PCNA) of Bos taurus (Bovine).